We begin with the raw amino-acid sequence, 329 residues long: MVQAKTWTLKKHFEGFPTDSNFELRTTELPPLNNGEVLLEALFLSVDPYMRVAAKKLKEGDSMMGEQVARVVESKNSAFPTGTIVVALLGWTSHSISDGNGLRKLPAEWPDKLPLSLALGTVGMPGLTAYFGLLDICGLKGGETVLVNAAAGAVGSVVGQIAKLKGCKVVGTAGSDEKVAYLKKLGFDVAFNYKTVKSLEEALRTASPDGYDCYFDNVGGEFSNTVILQMKTFGRIAICGAISQYNRTGPCPPGPSPEVIIYQQLRMEGFIVTRWQGEVRQKALTDLMNWVSEGKIRYHEYITEGFEKMPAAFMGMLKGDNLGKTIVKA.

The residue at position 18 (Thr18) is a Phosphothreonine. Ser20 is subject to Phosphoserine. NADP(+) is bound by residues 152-155, Lys178, Tyr193, Asn217, 239-245, 270-272, and Asn321; these read GAVG, CGAISQY, and FIV. The residue at position 178 (Lys178) is an N6-(2-hydroxyisobutyryl)lysine; alternate. At Lys178 the chain carries N6-acetyllysine; alternate.

It belongs to the NADP-dependent oxidoreductase L4BD family. As to quaternary structure, monomer or homodimer.

It localises to the cytoplasm. The enzyme catalyses 13,14-dihydro-15-oxo-prostaglandin E1 + NADP(+) = 15-oxoprostaglandin E1 + NADPH + H(+). It catalyses the reaction 13,14-dihydro-15-oxo-prostaglandin E2 + NADP(+) = 15-oxoprostaglandin E2 + NADPH + H(+). It carries out the reaction 13,14-dihydro-15-oxo-prostaglandin F1alpha + NADP(+) = 15-oxoprostaglandin F1alpha + NADPH + H(+). The catalysed reaction is 13,14-dihydro-15-oxo-PGF2alpha + NADP(+) = 15-oxoprostaglandin F2alpha + NADPH + H(+). The enzyme catalyses leukotriene B4 + NADP(+) = 12-oxo-leukotriene B4 + NADPH + H(+). It catalyses the reaction 20-hydroxy-leukotriene B4 + NADP(+) = 12-oxo-20-hydroxy-leukotriene B4 + NADPH + H(+). It carries out the reaction 6-trans-leukotriene B4 + NADP(+) = 12-oxo-(5S)-hydroxy-(6E,8E,10E,14Z)-eicosatetraenoate + NADPH + H(+). The catalysed reaction is (5S,12S)-dihydroxy-(6E,10E,12E,14Z)-eicosatetraenoate + NADP(+) = 12-oxo-(5S)-hydroxy-(6E,8E,10E,14Z)-eicosatetraenoate + NADPH + H(+). The enzyme catalyses an n-alkanal + NADP(+) = an alk-2-enal + NADPH + H(+). It catalyses the reaction hexanal + NADP(+) = (E)-hex-2-enal + NADPH + H(+). It carries out the reaction octanal + NADP(+) = (2E)-octenal + NADPH + H(+). The catalysed reaction is decanal + NADP(+) = (2E)-decenal + NADPH + H(+). The enzyme catalyses dodecanal + NADP(+) = (2E)-dodecenal + NADPH + H(+). It catalyses the reaction 4-hydroxynonanal + NADP(+) = (E)-4-hydroxynon-2-enal + NADPH + H(+). It carries out the reaction pentan-2-one + NADP(+) = (E)-pent-3-en-2-one + NADPH + H(+). The catalysed reaction is nonan-2-one + NADP(+) = (3E)-nonen-2-one + NADPH + H(+). Its function is as follows. NAD(P)H-dependent oxidoreductase involved in metabolic inactivation of pro- and anti-inflammatory eicosanoids: prostaglandins (PG), leukotrienes (LT) and lipoxins (LX). Catalyzes with high efficiency the reduction of the 13,14 double bond of 15-oxoPGs, including 15-oxo-PGE1, 15-oxo-PGE2, 15-oxo-PGF1-alpha and 15-oxo-PGF2-alpha. Catalyzes with lower efficiency the oxidation of the hydroxyl group at C12 of LTB4 and its derivatives, converting them into biologically less active 12-oxo-LTB4 metabolites. Reduces 15-oxo-LXA4 to 13,14 dihydro-15-oxo-LXA4, enhancing neutrophil recruitment at the inflammatory site. Plays a role in metabolic detoxification of alkenals and ketones. Reduces alpha,beta-unsaturated alkenals and ketones, particularly those with medium-chain length, showing highest affinity toward (2E)-decenal and (3E)-3-nonen-2-one. Inactivates 4-hydroxy-2-nonenal, a cytotoxic lipid constituent of oxidized low-density lipoprotein particles. In Rattus norvegicus (Rat), this protein is Prostaglandin reductase 1 (Ptgr1).